The primary structure comprises 269 residues: Protein LNK3 (269 aa).

In terms of assembly, interacts with REV8.

Its function is as follows. Probable transcriptional coactivator. The protein is Protein LNK3 of Arabidopsis thaliana (Mouse-ear cress).